A 497-amino-acid chain; its full sequence is Glycerol kinase (497 aa).

An ADP-binding site is contributed by threonine 12. ATP-binding residues include threonine 12, threonine 13, and serine 14. Residue threonine 12 coordinates sn-glycerol 3-phosphate. Arginine 16 is an ADP binding site. Sn-glycerol 3-phosphate contacts are provided by arginine 82, glutamate 83, tyrosine 134, and aspartate 243. Arginine 82, glutamate 83, tyrosine 134, aspartate 243, and glutamine 244 together coordinate glycerol. Residues threonine 265 and glycine 308 each contribute to the ADP site. ATP-binding residues include threonine 265, glycine 308, glutamine 312, and glycine 409. 2 residues coordinate ADP: glycine 409 and asparagine 413.

Belongs to the FGGY kinase family.

It carries out the reaction glycerol + ATP = sn-glycerol 3-phosphate + ADP + H(+). The protein operates within polyol metabolism; glycerol degradation via glycerol kinase pathway; sn-glycerol 3-phosphate from glycerol: step 1/1. Its activity is regulated as follows. Inhibited by fructose 1,6-bisphosphate (FBP). Functionally, key enzyme in the regulation of glycerol uptake and metabolism. Catalyzes the phosphorylation of glycerol to yield sn-glycerol 3-phosphate. This is Glycerol kinase from Solidesulfovibrio magneticus (strain ATCC 700980 / DSM 13731 / RS-1) (Desulfovibrio magneticus).